Here is a 322-residue protein sequence, read N- to C-terminus: Aspartate--ammonia ligase (322 aa).

It belongs to the class-II aminoacyl-tRNA synthetase family. AsnA subfamily.

It localises to the cytoplasm. It catalyses the reaction L-aspartate + NH4(+) + ATP = L-asparagine + AMP + diphosphate + H(+). Its pathway is amino-acid biosynthesis; L-asparagine biosynthesis; L-asparagine from L-aspartate (ammonia route): step 1/1. The polypeptide is Aspartate--ammonia ligase (Lactiplantibacillus plantarum (strain ATCC BAA-793 / NCIMB 8826 / WCFS1) (Lactobacillus plantarum)).